A 280-amino-acid polypeptide reads, in one-letter code: Dimethylglycine N-methyltransferase (280 aa).

The protein belongs to the methyltransferase superfamily. Monomer.

It catalyses the reaction N,N-dimethylglycine + S-adenosyl-L-methionine = glycine betaine + S-adenosyl-L-homocysteine + H(+). It participates in amine and polyamine biosynthesis; betaine biosynthesis via glycine pathway; betaine from glycine: step 3/3. Its function is as follows. Catalyzes the methylation of dimethylglycine to betaine with S-adenosylmethionine (AdoMet) acting as the methyl donor. It has strict specificity for dimethylglycine as the methyl group acceptors. This is Dimethylglycine N-methyltransferase from Parasynechococcus marenigrum (strain WH8102).